Consider the following 468-residue polypeptide: 3-isopropylmalate dehydratase large subunit (468 aa).

Cys-349, Cys-409, and Cys-412 together coordinate [4Fe-4S] cluster.

Belongs to the aconitase/IPM isomerase family. LeuC type 1 subfamily. Heterodimer of LeuC and LeuD. [4Fe-4S] cluster is required as a cofactor.

It catalyses the reaction (2R,3S)-3-isopropylmalate = (2S)-2-isopropylmalate. It functions in the pathway amino-acid biosynthesis; L-leucine biosynthesis; L-leucine from 3-methyl-2-oxobutanoate: step 2/4. In terms of biological role, catalyzes the isomerization between 2-isopropylmalate and 3-isopropylmalate, via the formation of 2-isopropylmaleate. The sequence is that of 3-isopropylmalate dehydratase large subunit from Nitrobacter hamburgensis (strain DSM 10229 / NCIMB 13809 / X14).